Reading from the N-terminus, the 922-residue chain is Translation initiation factor IF-2 (922 aa).

The interval 243 to 329 is disordered; that stretch reads AAREAAKLAE…GKSKSGQEET (87 aa). The segment covering 250–264 has biased composition (low complexity); it reads LAEAQKAAAPAPAAP. The segment covering 267–298 has biased composition (basic and acidic residues); that stretch reads KTLHKPDKPAAAKGAKGPDKKPAGAWKDDAAR. The region spanning 422 to 589 is the tr-type G domain; it reads ARPPVVTVMG…AILLQAEVLE (168 aa). Positions 431–438 are G1; the sequence is GHVDHGKT. Residue 431–438 coordinates GTP; sequence GHVDHGKT. The interval 456 to 460 is G2; that stretch reads GITQH. A G3 region spans residues 477-480; that stretch reads DTPG. Residues 477–481 and 531–534 contribute to the GTP site; these read DTPGH and NKID. Residues 531–534 form a G4 region; that stretch reads NKID. Positions 567 to 569 are G5; that stretch reads SAK.

The protein belongs to the TRAFAC class translation factor GTPase superfamily. Classic translation factor GTPase family. IF-2 subfamily.

The protein resides in the cytoplasm. In terms of biological role, one of the essential components for the initiation of protein synthesis. Protects formylmethionyl-tRNA from spontaneous hydrolysis and promotes its binding to the 30S ribosomal subunits. Also involved in the hydrolysis of GTP during the formation of the 70S ribosomal complex. This Thiobacillus denitrificans (strain ATCC 25259 / T1) protein is Translation initiation factor IF-2.